Here is a 1031-residue protein sequence, read N- to C-terminus: Protein translocase subunit SecA (1031 aa).

ATP-binding positions include Gln143, 161-165, and Asp661; that span reads GEGKT. Over residues 963–973 the composition is skewed to basic and acidic residues; that stretch reads KERLVAKHEES. A disordered region spans residues 963–1031; that stretch reads KERLVAKHEE…GKKYKNCCGR (69 aa). Zn(2+) is bound by residues Cys1017, Cys1019, Cys1028, and Cys1029.

It belongs to the SecA family. In terms of assembly, monomer and homodimer. Part of the essential Sec protein translocation apparatus which comprises SecA, SecYEG and auxiliary proteins SecDF. Other proteins may also be involved. Requires Zn(2+) as cofactor.

It is found in the cell inner membrane. It localises to the cytoplasm. It catalyses the reaction ATP + H2O + cellular proteinSide 1 = ADP + phosphate + cellular proteinSide 2.. Part of the Sec protein translocase complex. Interacts with the SecYEG preprotein conducting channel. Has a central role in coupling the hydrolysis of ATP to the transfer of proteins into and across the cell membrane, serving as an ATP-driven molecular motor driving the stepwise translocation of polypeptide chains across the membrane. In Prosthecochloris aestuarii (strain DSM 271 / SK 413), this protein is Protein translocase subunit SecA.